The following is a 471-amino-acid chain: Proton-coupled amino acid transporter-like protein pathetic (471 aa).

N-linked (GlcNAc...) asparagine glycosylation occurs at Asn-61. 10 helical membrane-spanning segments follow: residues Phe-81–Ile-101, Ile-153–Ala-173, Ala-187–Val-207, Val-216–Val-236, Leu-253–Leu-273, Phe-283–Leu-303, Leu-337–Ile-357, Val-375–Gly-395, Phe-397–Ile-417, and Trp-432–Thr-452.

This sequence belongs to the amino acid/polyamine transporter 2 family. In third instar larvae, expressed at highest levels in the brain and digestive system with particularly high levels in surface glia of the brain (at protein level). In third instar larvae, expressed in all cells of the body wall (at protein level). Within the body wall of third instar larvae, most highly expressed in epithelial cells and sensory neurons. Expressed at a similar level in all da neurons (at protein level). Widely expressed during embryonic and late larval stages. Levels are highly dynamic in embryogenesis with surges of expression in many structures, including muscle primordia, salivary glands, proventriculus, trachea and gonads. Expressed in all or most cells of larval imaginal disks. Expression is also particularly strong in the pouch and hinge regions of the wing disk and in the morphogenetic furrow of the eye disk.

The protein localises to the cell membrane. Its subcellular location is the lysosome membrane. The protein resides in the late endosome membrane. It localises to the cell projection. It is found in the axon. The protein localises to the dendrite. Its subcellular location is the perikaryon. The protein resides in the cytoplasm. Amino acid transporter which has pH-dependent electrogenic transport activity for alanine and glycine but not for proline. Plays a role in positive regulation of growth by directly or indirectly modulating the effects of the TOR signaling pathway. Required in a cell-autonomous manner for dendrite growth in neurons with large dendrite arbors. The sequence is that of Proton-coupled amino acid transporter-like protein pathetic from Drosophila melanogaster (Fruit fly).